A 77-amino-acid chain; its full sequence is RNA-binding protein Hfq (77 aa).

Positions 10-70 (DIFLNSARKN…ITTVTPEKPI (61 aa)) constitute a Sm domain.

The protein belongs to the Hfq family. In terms of assembly, homohexamer.

Functionally, RNA chaperone that binds small regulatory RNA (sRNAs) and mRNAs to facilitate mRNA translational regulation in response to envelope stress, environmental stress and changes in metabolite concentrations. Also binds with high specificity to tRNAs. The protein is RNA-binding protein Hfq of Clostridium botulinum (strain Eklund 17B / Type B).